A 95-amino-acid polypeptide reads, in one-letter code: uncharacterized protein (95 aa).

A helical membrane pass occupies residues 12 to 32 (IASLVVSVVVLLIGLILWFFI).

It is found in the cell membrane. This is an uncharacterized protein from Escherichia coli O6:H1 (strain CFT073 / ATCC 700928 / UPEC).